A 222-amino-acid chain; its full sequence is UPF0502 protein Lcho_2066 (222 aa).

It belongs to the UPF0502 family.

The sequence is that of UPF0502 protein Lcho_2066 from Leptothrix cholodnii (strain ATCC 51168 / LMG 8142 / SP-6) (Leptothrix discophora (strain SP-6)).